A 327-amino-acid chain; its full sequence is N-acetylmuramoyl-L-alanine amidase sle1 (327 aa).

Residues 1-25 (MRKKIIATVIGTSALAAVTWTNADA) form the signal peptide. LysM domains lie at 27-70 (TTYK…SLKV), 86-129 (STYT…KLKV), and 150-193 (TTYT…KLKV). The disordered stretch occupies residues 68-89 (LKVSGSTSSSTSSNTSTGSTYT). The span at 71 to 87 (SGSTSSSTSSNTSTGST) shows a compositional bias: low complexity. In terms of domain architecture, Peptidase C51 spans 203-327 (GSSSTGSAGY…SQVSSYVYIH (125 aa)).

The protein localises to the secreted. It localises to the cell surface. The catalysed reaction is Hydrolyzes the link between N-acetylmuramoyl residues and L-amino acid residues in certain cell-wall glycopeptides.. Peptidoglycan hydrolase involved in the splitting of the septum during cell division. In Staphylococcus saprophyticus subsp. saprophyticus (strain ATCC 15305 / DSM 20229 / NCIMB 8711 / NCTC 7292 / S-41), this protein is N-acetylmuramoyl-L-alanine amidase sle1 (sle1).